The sequence spans 374 residues: Putative C-&gt;U-editing enzyme APOBEC-4 (374 aa).

One can recognise a CMP/dCMP-type deaminase domain in the interval 60–176; that stretch reads PQTKHLTFYE…AWNRKALQSL (117 aa). Residue His-92 coordinates Zn(2+). The active-site Proton donor is Glu-94. Positions 126 and 133 each coordinate Zn(2+). Residues 259–280 are disordered; it reads EKHPLGSAAPAQRQPTRGQDPR.

It belongs to the cytidine and deoxycytidylate deaminase family. Zn(2+) serves as cofactor. Predominantly expressed in testis.

Functionally, putative C to U editing enzyme whose physiological substrate is not yet known. This is Putative C-&gt;U-editing enzyme APOBEC-4 (Apobec4) from Mus musculus (Mouse).